The primary structure comprises 385 residues: Probable peptidoglycan glycosyltransferase FtsW (385 aa).

A run of 9 helical transmembrane segments spans residues 18–38, 57–77, 81–101, 111–131, 157–177, 195–215, 280–300, 311–331, and 347–367; these read LLWT…SASL, IYLA…PLAL, LRFV…IPGL, WIAL…CFVL, LLGV…VVVL, FLLI…AEPY, LGLL…WRVF, LLYH…QAFI, and LPFI…VGLI.

The protein belongs to the SEDS family. FtsW subfamily.

The protein localises to the cell inner membrane. It catalyses the reaction [GlcNAc-(1-&gt;4)-Mur2Ac(oyl-L-Ala-gamma-D-Glu-L-Lys-D-Ala-D-Ala)](n)-di-trans,octa-cis-undecaprenyl diphosphate + beta-D-GlcNAc-(1-&gt;4)-Mur2Ac(oyl-L-Ala-gamma-D-Glu-L-Lys-D-Ala-D-Ala)-di-trans,octa-cis-undecaprenyl diphosphate = [GlcNAc-(1-&gt;4)-Mur2Ac(oyl-L-Ala-gamma-D-Glu-L-Lys-D-Ala-D-Ala)](n+1)-di-trans,octa-cis-undecaprenyl diphosphate + di-trans,octa-cis-undecaprenyl diphosphate + H(+). Its pathway is cell wall biogenesis; peptidoglycan biosynthesis. Its function is as follows. Peptidoglycan polymerase that is essential for cell division. This chain is Probable peptidoglycan glycosyltransferase FtsW, found in Alcanivorax borkumensis (strain ATCC 700651 / DSM 11573 / NCIMB 13689 / SK2).